The sequence spans 119 residues: Ribonuclease P protein component (119 aa).

This sequence belongs to the RnpA family. As to quaternary structure, consists of a catalytic RNA component (M1 or rnpB) and a protein subunit.

The enzyme catalyses Endonucleolytic cleavage of RNA, removing 5'-extranucleotides from tRNA precursor.. RNaseP catalyzes the removal of the 5'-leader sequence from pre-tRNA to produce the mature 5'-terminus. It can also cleave other RNA substrates such as 4.5S RNA. The protein component plays an auxiliary but essential role in vivo by binding to the 5'-leader sequence and broadening the substrate specificity of the ribozyme. This Borreliella burgdorferi (strain ATCC 35210 / DSM 4680 / CIP 102532 / B31) (Borrelia burgdorferi) protein is Ribonuclease P protein component.